The following is an 89-amino-acid chain: Small ribosomal subunit protein uS15 (89 aa).

The segment at 1 to 24 (MALTQTKKQELISQYQAHETDTGS) is disordered.

This sequence belongs to the universal ribosomal protein uS15 family. In terms of assembly, part of the 30S ribosomal subunit. Forms a bridge to the 50S subunit in the 70S ribosome, contacting the 23S rRNA.

One of the primary rRNA binding proteins, it binds directly to 16S rRNA where it helps nucleate assembly of the platform of the 30S subunit by binding and bridging several RNA helices of the 16S rRNA. Functionally, forms an intersubunit bridge (bridge B4) with the 23S rRNA of the 50S subunit in the ribosome. In Microcystis aeruginosa (strain NIES-843 / IAM M-2473), this protein is Small ribosomal subunit protein uS15.